The following is a 136-amino-acid chain: Large ribosomal subunit protein uL16 (136 aa).

The protein belongs to the universal ribosomal protein uL16 family. Part of the 50S ribosomal subunit.

Its function is as follows. Binds 23S rRNA and is also seen to make contacts with the A and possibly P site tRNAs. This chain is Large ribosomal subunit protein uL16, found in Shewanella denitrificans (strain OS217 / ATCC BAA-1090 / DSM 15013).